The following is a 365-amino-acid chain: IgG receptor FcRn large subunit p51 (365 aa).

The N-terminal stretch at 1 to 23 (MGVPRPQPWALGLLLFLLPGSLG) is a signal peptide. The tract at residues 24 to 110 (AESHLSLLYH…AFKALGGKGP (87 aa)) is alpha-1. Over 24–297 (AESHLSLLYH…VELESPAKSS (274 aa)) the chain is Extracellular. The segment at 111 to 200 (YTLQGLLGCE…ERGRGNLEWK (90 aa)) is alpha-2. Disulfide bonds link cysteine 119–cysteine 182 and cysteine 221–cysteine 275. Asparagine 125 carries an N-linked (GlcNAc...) asparagine glycan. The segment at 201–290 (EPPSMRLKAR…GLAQPLRVEL (90 aa)) is alpha-3. The Ig-like C1-type domain maps to 202-289 (PPSMRLKARP…AGLAQPLRVE (88 aa)). Residues 291-297 (ESPAKSS) are connecting peptide. Residues 298-321 (VLVVGIVIGVLLLTAAAVGGALLW) form a helical membrane-spanning segment. At 322 to 365 (RRMRSGLPAPWISLRGDDTGVLLPTPGEAQDADLKDVNVIPATA) the chain is on the cytoplasmic side. Position 334 is a phosphoserine (serine 334).

This sequence belongs to the immunoglobulin superfamily. FcRn complex consists of two subunits: p51, and p14 which is equivalent to beta-2-microglobulin. It forms an MHC class I-like heterodimer. Interacts with albumin/ALB; this interaction regulates ALB homeostasis. In terms of assembly, (Microbial infection) Interacts with Echovirus 6, Echovirus 11 and Echovirus 30 capsid protein VP1. As to expression, expressed in full-term placenta, heart, lung, liver, muscle, kidney, pancreas, and both fetal and adult small intestine.

It is found in the cell membrane. The protein resides in the endosome membrane. Functionally, cell surface receptor that transfers passive humoral immunity from the mother to the newborn. Binds to the Fc region of monomeric immunoglobulin gamma and mediates its selective uptake from milk. IgG in the milk is bound at the apical surface of the intestinal epithelium. The resultant FcRn-IgG complexes are transcytosed across the intestinal epithelium and IgG is released from FcRn into blood or tissue fluids. Throughout life, contributes to effective humoral immunity by recycling IgG and extending its half-life in the circulation. Mechanistically, monomeric IgG binding to FcRn in acidic endosomes of endothelial and hematopoietic cells recycles IgG to the cell surface where it is released into the circulation. In addition of IgG, regulates homeostasis of the other most abundant circulating protein albumin/ALB. In terms of biological role, (Microbial infection) Acts as an uncoating receptor for a panel of echoviruses including Echovirus 5, 6, 7, 9, 11, 13, 25 and 29. In Homo sapiens (Human), this protein is IgG receptor FcRn large subunit p51 (FCGRT).